Reading from the N-terminus, the 188-residue chain is Threonylcarbamoyl-AMP synthase (188 aa).

The YrdC-like domain occupies 3–188; the sequence is QLHPSEIKDI…RSGKILRNGQ (186 aa).

It belongs to the SUA5 family. TsaC subfamily.

The protein localises to the cytoplasm. It carries out the reaction L-threonine + hydrogencarbonate + ATP = L-threonylcarbamoyladenylate + diphosphate + H2O. Functionally, required for the formation of a threonylcarbamoyl group on adenosine at position 37 (t(6)A37) in tRNAs that read codons beginning with adenine. Catalyzes the conversion of L-threonine, HCO(3)(-)/CO(2) and ATP to give threonylcarbamoyl-AMP (TC-AMP) as the acyladenylate intermediate, with the release of diphosphate. The protein is Threonylcarbamoyl-AMP synthase of Shewanella sp. (strain MR-4).